A 390-amino-acid polypeptide reads, in one-letter code: Lipoyl synthase, mitochondrial (390 aa).

Residues 1 to 19 constitute a mitochondrion transit peptide; it reads MPTLLRILRPPRSPFTRCL. The interval 23 to 48 is disordered; the sequence is ATPSSSGSSSRSKFTESLETGPGLDD. [4Fe-4S] cluster is bound by residues C98, C103, C109, C136, C140, C143, and S350. Positions 119 to 339 constitute a Radical SAM core domain; the sequence is AEGRSAATAT…KEVAENLGFL (221 aa).

The protein belongs to the radical SAM superfamily. Lipoyl synthase family. [4Fe-4S] cluster serves as cofactor.

The protein localises to the mitochondrion. The enzyme catalyses [[Fe-S] cluster scaffold protein carrying a second [4Fe-4S](2+) cluster] + N(6)-octanoyl-L-lysyl-[protein] + 2 oxidized [2Fe-2S]-[ferredoxin] + 2 S-adenosyl-L-methionine + 4 H(+) = [[Fe-S] cluster scaffold protein] + N(6)-[(R)-dihydrolipoyl]-L-lysyl-[protein] + 4 Fe(3+) + 2 hydrogen sulfide + 2 5'-deoxyadenosine + 2 L-methionine + 2 reduced [2Fe-2S]-[ferredoxin]. Its pathway is protein modification; protein lipoylation via endogenous pathway; protein N(6)-(lipoyl)lysine from octanoyl-[acyl-carrier-protein]: step 2/2. In terms of biological role, catalyzes the radical-mediated insertion of two sulfur atoms into the C-6 and C-8 positions of the octanoyl moiety bound to the lipoyl domains of lipoate-dependent enzymes, thereby converting the octanoylated domains into lipoylated derivatives. The protein is Lipoyl synthase, mitochondrial of Laccaria bicolor (strain S238N-H82 / ATCC MYA-4686) (Bicoloured deceiver).